A 48-amino-acid polypeptide reads, in one-letter code: ATP synthase protein 8 (48 aa).

A helical membrane pass occupies residues Leu-4–Ile-24.

This sequence belongs to the ATPase protein 8 family. As to quaternary structure, F-type ATPases have 2 components, CF(1) - the catalytic core - and CF(0) - the membrane proton channel.

It is found in the mitochondrion membrane. In terms of biological role, mitochondrial membrane ATP synthase (F(1)F(0) ATP synthase or Complex V) produces ATP from ADP in the presence of a proton gradient across the membrane which is generated by electron transport complexes of the respiratory chain. F-type ATPases consist of two structural domains, F(1) - containing the extramembraneous catalytic core and F(0) - containing the membrane proton channel, linked together by a central stalk and a peripheral stalk. During catalysis, ATP synthesis in the catalytic domain of F(1) is coupled via a rotary mechanism of the central stalk subunits to proton translocation. Part of the complex F(0) domain. Minor subunit located with subunit a in the membrane. The protein is ATP synthase protein 8 (atp8) of Aspergillus amstelodami.